The chain runs to 218 residues: Small ribosomal subunit protein uS3 (218 aa).

The KH type-2 domain occupies 38–106 (VREYINKRLQ…RVHINIVEIK (69 aa)).

This sequence belongs to the universal ribosomal protein uS3 family. As to quaternary structure, part of the 30S ribosomal subunit. Forms a tight complex with proteins S10 and S14.

Binds the lower part of the 30S subunit head. Binds mRNA in the 70S ribosome, positioning it for translation. The chain is Small ribosomal subunit protein uS3 from Geobacillus thermodenitrificans (strain NG80-2).